Reading from the N-terminus, the 412-residue chain is MSSKGSVVLAYSGGLDTSCILVWLKEQGYDVIAYLANIGQKEDFEEARKKALKLGAKKVFIEDVSKEFVEEFIWPAVQSSALYEDRYLLGTSLARPCIARKQVEIAQREGAKYVSHGATGKGNDQVRFELTCYSLAPQIKVIAPWRMPEFYNRFKGRNDLMEYAKQHGIPIPVTPKSPWSMDENLMHISYEAGILENPKNQAPPGLYTKTQDPAKAPNTPDVLEIEFKKGVPVKVTNVKDGTTHSTSLDLFMYLNEVAGKHGVGRIDIVENRFIGMKSRGIYETPAGTILYHAHLDIEAFTMDREVRKIKQGLGLKFAELVYTGFWHSPECEFVRHCIDKSQERVEGKVQVSVFKGQVYILGRESPLSLYNEELVSMNVQGDYEPIDATGFININSLRLKEYHRLQSKVTAK.

Residues 10–18 (AYSGGLDTS) and alanine 36 contribute to the ATP site. The L-citrulline site is built by tyrosine 87 and serine 92. Tyrosine 87 carries the post-translational modification Phosphotyrosine. Lysine 112 carries the N6-acetyllysine modification. Tyrosine 113 is modified (phosphotyrosine). 115-123 (SHGATGKGN) is a binding site for ATP. Positions 119, 123, and 124 each coordinate L-aspartate. Residue asparagine 123 participates in L-citrulline binding. Residue arginine 127 coordinates L-citrulline. N6-acetyllysine; by CLOCK occurs at positions 165 and 176. Residues serine 177 and serine 180 each carry the phosphoserine modification. L-citrulline contacts are provided by serine 180 and serine 189. A Phosphothreonine modification is found at threonine 219. L-citrulline contacts are provided by glutamate 270 and tyrosine 282.

The protein belongs to the argininosuccinate synthase family. Type 1 subfamily. In terms of assembly, homotetramer. Interacts with NMRAL1. Interacts with CLOCK; in a circadian manner. Forms tissue-specific complexes with ASL, SLC7A1, HSP90AA1 and nitric oxide synthase NOS1, NOS2 or NOS3; the complex regulates cell-autonomous L-arginine synthesis and citrulline recycling while channeling extracellular L-arginine to nitric oxide synthesis pathway. Post-translationally, acetylated by CLOCK in a circadian manner which negatively regulates its enzyme activity. Deacetylated by histone deacetylases.

It is found in the cytoplasm. The protein resides in the cytosol. The catalysed reaction is L-citrulline + L-aspartate + ATP = 2-(N(omega)-L-arginino)succinate + AMP + diphosphate + H(+). The protein operates within amino-acid biosynthesis; L-arginine biosynthesis; L-arginine from L-ornithine and carbamoyl phosphate: step 2/3. It functions in the pathway nitrogen metabolism; urea cycle; (N(omega)-L-arginino)succinate from L-aspartate and L-citrulline: step 1/1. Functionally, one of the enzymes of the urea cycle, the metabolic pathway transforming neurotoxic amonia produced by protein catabolism into inocuous urea in the liver of ureotelic animals. Catalyzes the formation of arginosuccinate from aspartate, citrulline and ATP and together with ASL it is responsible for the biosynthesis of arginine in most body tissues. Indirectly, may be involved in the control of blood pressure. The sequence is that of Argininosuccinate synthase from Rattus norvegicus (Rat).